Consider the following 514-residue polypeptide: Membrane-bound lytic murein transglycosylase F (514 aa).

Residues 1–30 form the signal peptide; that stretch reads MKKLKINYLFIGILTLLLAAALWPSIPWFG. Residues 31–269 form a non-LT domain region; it reads KTENHIAAIQ…RIEEKYLGHG (239 aa). The tract at residues 270–514 is LT domain; that stretch reads DDFDYVDTRS…LFTPQKKEEK (245 aa). Glu314 is an active-site residue.

This sequence in the N-terminal section; belongs to the bacterial solute-binding protein 3 family. In the C-terminal section; belongs to the transglycosylase Slt family.

It is found in the cell outer membrane. It catalyses the reaction Exolytic cleavage of the (1-&gt;4)-beta-glycosidic linkage between N-acetylmuramic acid (MurNAc) and N-acetylglucosamine (GlcNAc) residues in peptidoglycan, from either the reducing or the non-reducing ends of the peptidoglycan chains, with concomitant formation of a 1,6-anhydrobond in the MurNAc residue.. Functionally, murein-degrading enzyme that degrades murein glycan strands and insoluble, high-molecular weight murein sacculi, with the concomitant formation of a 1,6-anhydromuramoyl product. Lytic transglycosylases (LTs) play an integral role in the metabolism of the peptidoglycan (PG) sacculus. Their lytic action creates space within the PG sacculus to allow for its expansion as well as for the insertion of various structures such as secretion systems and flagella. The polypeptide is Membrane-bound lytic murein transglycosylase F (Salmonella paratyphi A (strain ATCC 9150 / SARB42)).